We begin with the raw amino-acid sequence, 318 residues long: Homoserine kinase (318 aa).

97–107 serves as a coordination point for ATP; that stretch reads PIGSGLGSSAC.

It belongs to the GHMP kinase family. Homoserine kinase subfamily.

The protein localises to the cytoplasm. The enzyme catalyses L-homoserine + ATP = O-phospho-L-homoserine + ADP + H(+). The protein operates within amino-acid biosynthesis; L-threonine biosynthesis; L-threonine from L-aspartate: step 4/5. In terms of biological role, catalyzes the ATP-dependent phosphorylation of L-homoserine to L-homoserine phosphate. This is Homoserine kinase from Aliivibrio salmonicida (strain LFI1238) (Vibrio salmonicida (strain LFI1238)).